A 291-amino-acid polypeptide reads, in one-letter code: MPSLKDLKNRIESVKSTRKITKAMQMVAAAKLRRAQEAAEQSRPYTERFNAVMAGLAASVGGSDSAPKLLSGTGSDKVQLLIVMTSERGLCGGFNTNIAKLARAHAQKLQGEGKDVKILTVGKKGRDQLKRDLGSLFIGHVDLTEIKRVSYVDAQGIAKDVLNRFDVGEFDVATIFYAKFVNVVSQIPTAQQIIPAKFEQQEGEEASTLFDYEPDEEAILADLLPRGVATQIFSALLENGASEQGARMSAMDNATRNAGEMIENLTIEFNRSRQAVITNELIEIISGAEAL.

Belongs to the ATPase gamma chain family. In terms of assembly, F-type ATPases have 2 components, CF(1) - the catalytic core - and CF(0) - the membrane proton channel. CF(1) has five subunits: alpha(3), beta(3), gamma(1), delta(1), epsilon(1). CF(0) has three main subunits: a, b and c.

It localises to the cell inner membrane. Produces ATP from ADP in the presence of a proton gradient across the membrane. The gamma chain is believed to be important in regulating ATPase activity and the flow of protons through the CF(0) complex. In Roseobacter denitrificans (strain ATCC 33942 / OCh 114) (Erythrobacter sp. (strain OCh 114)), this protein is ATP synthase gamma chain.